A 364-amino-acid chain; its full sequence is Pre-small/secreted glycoprotein (364 aa).

The N-terminal stretch at 1–32 (MGVTGILQLPRDRFKRTSFFLWVIILFQRTFS) is a signal peptide. A glycan (N-linked (GlcNAc...) asparagine; by host) is linked at N40. 2 disulfides stabilise this stretch: C108–C135 and C121–C147. Residues N204, N228, N238, N257, and N268 are each glycosylated (N-linked (GlcNAc...) asparagine; by host).

It belongs to the filoviruses glycoprotein family. Homodimer; disulfide-linked. The homodimers are linked by two disulfide bonds in a parallel orientation. In terms of assembly, monomer. This precursor is processed into mature sGP and delta-peptide by host furin or furin-like proteases. The cleavage site corresponds to the furin optimal cleavage sequence [KR]-X-[KR]-R. Post-translationally, N-glycosylated. In terms of processing, O-glycosylated.

Its subcellular location is the secreted. In terms of biological role, seems to possess an anti-inflammatory activity as it can reverse the barrier-decreasing effects of TNF alpha. Might therefore contribute to the lack of inflammatory reaction seen during infection in spite the of extensive necrosis and massive virus production. Does not seem to be involved in activation of primary macrophages. Does not seem to interact specifically with neutrophils. Viroporin that permeabilizes mammalian cell plasma membranes. It acts by altering permeation of ionic compounds and small molecules. This activity may lead to viral enterotoxic activity. The chain is Pre-small/secreted glycoprotein (GP) from Zaire ebolavirus (strain Eckron-76) (ZEBOV).